The following is a 307-amino-acid chain: 4-hydroxythreonine-4-phosphate dehydrogenase (307 aa).

Residues histidine 121 and threonine 122 each coordinate substrate. The a divalent metal cation site is built by histidine 150, histidine 189, and histidine 246. Residues lysine 254, asparagine 263, and arginine 272 each contribute to the substrate site.

Belongs to the PdxA family. In terms of assembly, homodimer. Zn(2+) serves as cofactor. Requires Mg(2+) as cofactor. It depends on Co(2+) as a cofactor.

Its subcellular location is the cytoplasm. It catalyses the reaction 4-(phosphooxy)-L-threonine + NAD(+) = 3-amino-2-oxopropyl phosphate + CO2 + NADH. The protein operates within cofactor biosynthesis; pyridoxine 5'-phosphate biosynthesis; pyridoxine 5'-phosphate from D-erythrose 4-phosphate: step 4/5. Its function is as follows. Catalyzes the NAD(P)-dependent oxidation of 4-(phosphooxy)-L-threonine (HTP) into 2-amino-3-oxo-4-(phosphooxy)butyric acid which spontaneously decarboxylates to form 3-amino-2-oxopropyl phosphate (AHAP). This chain is 4-hydroxythreonine-4-phosphate dehydrogenase, found in Campylobacter fetus subsp. fetus (strain 82-40).